A 287-amino-acid chain; its full sequence is RNA polymerase sigma factor RpoH (287 aa).

Residues Leu54 to Arg123 are sigma-70 factor domain-2. The Interaction with polymerase core subunit RpoC motif lies at Asp78–Gln81. A sigma-70 factor domain-4 region spans residues Ala230–Val283. Positions Leu256–Lys275 form a DNA-binding region, H-T-H motif.

Belongs to the sigma-70 factor family. RpoH subfamily. In terms of assembly, interacts with the RNA polymerase core enzyme.

The protein localises to the cytoplasm. In terms of biological role, sigma factors are initiation factors that promote the attachment of RNA polymerase to specific initiation sites and are then released. This sigma factor is involved in regulation of expression of heat shock genes. This is RNA polymerase sigma factor RpoH from Buchnera aphidicola subsp. Baizongia pistaciae (strain Bp).